We begin with the raw amino-acid sequence, 509 residues long: Maturase K (509 aa).

This sequence belongs to the intron maturase 2 family. MatK subfamily.

Its subcellular location is the plastid. It is found in the chloroplast. Its function is as follows. Usually encoded in the trnK tRNA gene intron. Probably assists in splicing its own and other chloroplast group II introns. The chain is Maturase K from Nicotiana sylvestris (Wood tobacco).